We begin with the raw amino-acid sequence, 331 residues long: MVIIHSPSYDLHNHEGHVENSGRTRAILRAIESSDLSPRFVEPGMAGIDDILMVHSSTHVEYLEVFAGRGGGWLDYDTYMTPESFSVARLSAGGAMLAAEEALRDGWSYSLGRPPGHHATYDRSMGFCIFNNIAIAIEHARRNLGVSRPLVLDFDVHHGNGTSSIFYRDRDVMYISIHQDPRTLFPGTGFIDETGSGEGEGFNLNIPMPRGSGNREYLWILGMILPAVLEGFRPDMIFVSAGFDAHRRDPLAEIMVDEEFFSWIGWFIHQTGLPCTAVLEGGYDPEALGRSNIAFMRGLDGEEYEPETAAPGGVSEIFSQLSDRFSAYFNF.

Catalysis depends on histidine 118, which acts as the Proton donor/acceptor. Zn(2+) is bound by residues aspartate 155, histidine 157, and aspartate 244.

This sequence belongs to the histone deacetylase family. Zn(2+) is required as a cofactor.

Probable deacetylase. The protein is Probable deacetylase MTH_1194 of Methanothermobacter thermautotrophicus (strain ATCC 29096 / DSM 1053 / JCM 10044 / NBRC 100330 / Delta H) (Methanobacterium thermoautotrophicum).